A 1164-amino-acid polypeptide reads, in one-letter code: MPTMRRTVSEIRSRAEGYEKTDDVSEKTSLADQEEVRTIFINQPQLTKFCNNHVSTAKYNIITFLPRFLYSQFRRAANSFFLFIALLQQIPDVSPTGRYTTLVPLLFILAVAAIKEIIEDIKRHKADNAVNKKQTQVLRNGAWEIVHWEKVAVGEIVKVTNGEHLPADLISLSSSEPQAMCYIETSNLDGETNLKIRQGLPATSDIKDVDSLMRISGRIECESPNRHLYDFVGNIRLDGHGTVPLGADQILLRGAQLRNTQWVHGIVVYTGHDTKLMQNSTSPPLKLSNVERITNVQILILFCILIAMSLVCSVGSAIWNRRHSGKDWYLNLNYGGASNFGLNFLTFIILFNNLIPISLLVTLEVVKFTQAYFINWDLDMHYEPTDTAAMARTSNLNEELGQVKYIFSDKTGTLTCNVMQFKKCTIAGVAYGHVPEPEDYGCSPDEWQNSQFGDEKTFSDSSLLENLQNNHPTAPIICEFLTMMAVCHTAVPEREGDKIIYQAASPDEGALVRAAKQLNFVFTGRTPDSVIIDSLGQEERYELLNVLEFTSARKRMSVIVRTPSGKLRLYCKGADTVIYDRLAETSKYKEITLKHLEQFATEGLRTLCFAVAEISESDFQEWRAVYQRASTSVQNRLLKLEESYELIEKNLQLLGATAIEDKLQDQVPETIETLMKADIKIWILTGDKQETAINIGHSCKLLKKNMGMIVINEGSLDGTRETLSRHCTTLGDALRKENDFALIIDGKTLKYALTFGVRQYFLDLALSCKAVICCRVSPLQKSEVVEMVKKQVKVVTLAIGDGANDVSMIQTAHVGVGISGNEGLQAANSSDYSIAQFKYLKNLLMIHGAWNYNRVSKCILYCFYKNIVLYIIEIWFAFVNGFSGQILFERWCIGLYNVMFTAMPPLTLGIFERSCRKENMLKYPELYKTSQNALDFNTKVFWVHCLNGLFHSVILFWFPLKALQYGTAFGNGKTSDYLLLGNFVYTFVVITVCLKAGLETSYWTWFSHIAIWGSIALWVVFFGIYSSLWPAIPMAPDMSGEAAMLFSSGVFWMGLLFIPVASLLLDVVYKVIKRTAFKTLVDEVQELEAKSQDPGAVVLGKSLTERAQLLKNVFKKNHVNLYRSESLQQNLLHGYAFSQDENGIVSQSEVIRAYDTTKQRPDEW.

Residues methionine 1–leucine 65 lie on the Cytoplasmic side of the membrane. A Phosphoserine modification is found at serine 25. Threonine 28 is modified (phosphothreonine). Phosphoserine is present on serine 29. Residues proline 66 to leucine 86 traverse the membrane as a helical segment. The Exoplasmic loop segment spans residues leucine 87–aspartate 92. The helical transmembrane segment at valine 93–lysine 115 threads the bilayer. At glutamate 116 to glutamine 297 the chain is on the cytoplasmic side. A helical membrane pass occupies residues isoleucine 298–tryptophan 319. The Exoplasmic loop portion of the chain corresponds to asparagine 320–phenylalanine 344. The chain crosses the membrane as a helical span at residues leucine 345–valine 366. Over lysine 367–lysine 857 the chain is Cytoplasmic. Catalysis depends on aspartate 409, which acts as the 4-aspartylphosphate intermediate. Aspartate 409, lysine 410, and threonine 411 together coordinate ATP. Aspartate 409 is a binding site for Mg(2+). Threonine 411 contacts Mg(2+). The residue at position 443 (serine 443) is a Phosphoserine. Residues glutamate 508, phenylalanine 549, lysine 572, arginine 605, threonine 685, glycine 686, aspartate 687, alanine 741–threonine 748, arginine 775, and lysine 781 each bind ATP. Aspartate 801 is a Mg(2+) binding site. Residues asparagine 804 and aspartate 805 each coordinate ATP. Position 805 (aspartate 805) interacts with Mg(2+). The chain crosses the membrane as a helical span at residues cysteine 858 to phenylalanine 878. Residues valine 879–arginine 890 are Exoplasmic loop-facing. A helical transmembrane segment spans residues tryptophan 891–isoleucine 910. Over phenylalanine 911 to valine 940 the chain is Cytoplasmic. A helical transmembrane segment spans residues phenylalanine 941–alanine 962. Topologically, residues leucine 963 to aspartate 976 are exoplasmic loop. The chain crosses the membrane as a helical span at residues tyrosine 977–glutamate 999. Topologically, residues threonine 1000 to tryptophan 1005 are cytoplasmic. Residues phenylalanine 1006–serine 1026 form a helical membrane-spanning segment. Topologically, residues serine 1027–methionine 1044 are exoplasmic loop. Residues leucine 1045–lysine 1070 traverse the membrane as a helical segment. Over valine 1071–tryptophan 1164 the chain is Cytoplasmic. Glycine 1095 to serine 1102 provides a ligand contact to ATP. At serine 1126 the chain carries Phosphoserine.

Belongs to the cation transport ATPase (P-type) (TC 3.A.3) family. Type IV subfamily. Component of a P4-ATPase flippase complex which consists of a catalytic alpha subunit and an accessory beta subunit. Interacts with TMEM30A to form a flippase complex; this complex forms an intermediate phosphoenzyme. Interacts with TMEM30B; this interaction is reported conflictingly. Requires Mg(2+) as cofactor. In terms of processing, cleaved by calpain in a caspase- and calcium influx-dependent manner during platelet apoptosis leading to a 100 kDa polypeptide. In terms of tissue distribution, found in most adult tissues except liver, testis and placenta. Most abundant in heart, brain and skeletal muscle. Also detected in fetal tissues. Isoform 1 is only detected in brain, skeletal muscle and heart and is the most abundant form in skeletal muscle. Highly expressed in platelets.

It localises to the cytoplasmic vesicle. The protein localises to the secretory vesicle. It is found in the chromaffin granule membrane. Its subcellular location is the cytoplasmic granule. The protein resides in the cell membrane. It localises to the endoplasmic reticulum. The protein localises to the golgi apparatus. It carries out the reaction ATP + H2O + phospholipidSide 1 = ADP + phosphate + phospholipidSide 2.. It catalyses the reaction a 1,2-diacyl-sn-glycero-3-phospho-L-serine(out) + ATP + H2O = a 1,2-diacyl-sn-glycero-3-phospho-L-serine(in) + ADP + phosphate + H(+). ATPase activity is stimulated by phosphatidylserine (PS) and minimally by phosphatidylethanolamine (PE). ATPase activity is inhibited by beryllium fluoride and aluminum trifluoride. Its function is as follows. Catalytic component of a P4-ATPase flippase complex which catalyzes the hydrolysis of ATP coupled to the transport of aminophospholipids from the outer to the inner leaflet of various membranes and ensures the maintenance of asymmetric distribution of phospholipids. Phospholipid translocation also seems to be implicated in vesicle formation and in uptake of lipid signaling molecules. In vitro, its ATPase activity is selectively and stereospecifically stimulated by phosphatidylserine (PS). The flippase complex ATP8A1:TMEM30A seems to play a role in regulation of cell migration probably involving flippase-mediated translocation of phosphatidylethanolamine (PE) at the cell membrane. Acts as aminophospholipid translocase at the cell membrane in neuronal cells. This Homo sapiens (Human) protein is Phospholipid-transporting ATPase IA.